The chain runs to 105 residues: Large ribosomal subunit protein uL24 (105 aa).

Belongs to the universal ribosomal protein uL24 family. Part of the 50S ribosomal subunit.

In terms of biological role, one of two assembly initiator proteins, it binds directly to the 5'-end of the 23S rRNA, where it nucleates assembly of the 50S subunit. One of the proteins that surrounds the polypeptide exit tunnel on the outside of the subunit. The protein is Large ribosomal subunit protein uL24 of Vibrio vulnificus (strain YJ016).